The following is a 1093-amino-acid chain: Mediator of RNA polymerase II transcription subunit 14 (1093 aa).

Disordered stretches follow at residues 1–61 (MPGV…KIDG) and 1035–1060 (TKSD…SQAA). The span at 19-31 (DTQTPSNGDNLRN) shows a compositional bias: polar residues. The segment covering 41 to 61 (KGDKDHDPDKESYTGKPKIDG) has biased composition (basic and acidic residues). Positions 1040–1056 (DYSTQPVPEKQSQTGAP) are enriched in polar residues.

The protein belongs to the Mediator complex subunit 14 family. As to quaternary structure, component of the Mediator complex.

It is found in the nucleus. Component of the Mediator complex, a coactivator involved in the regulated transcription of nearly all RNA polymerase II-dependent genes. Mediator functions as a bridge to convey information from gene-specific regulatory proteins to the basal RNA polymerase II transcription machinery. Mediator is recruited to promoters by direct interactions with regulatory proteins and serves as a scaffold for the assembly of a functional preinitiation complex with RNA polymerase II and the general transcription factors. This is Mediator of RNA polymerase II transcription subunit 14 (rgr1) from Neosartorya fischeri (strain ATCC 1020 / DSM 3700 / CBS 544.65 / FGSC A1164 / JCM 1740 / NRRL 181 / WB 181) (Aspergillus fischerianus).